The following is a 176-amino-acid chain: HTH-type transcriptional regulator DctR (176 aa).

The region spanning 109–174 (VPEANVSLSR…ELVRHQHIDY (66 aa)) is the HTH luxR-type domain. The segment at residues 133–152 (TEDILEKLKISLKTFYCHKH) is a DNA-binding region (H-T-H motif).

Its function is as follows. May act as a transcriptional regulator of dctA. In Shigella flexneri, this protein is HTH-type transcriptional regulator DctR (dctR).